Consider the following 29-residue polypeptide: Brevinin-2Tc (29 aa).

Cysteine 23 and cysteine 29 are joined by a disulfide.

Belongs to the frog skin active peptide (FSAP) family. Brevinin subfamily. In terms of tissue distribution, expressed by the skin glands.

The protein resides in the secreted. Antibacterial activity against representative Gram-negative and Gram-positive bacteria. This Rana temporaria (European common frog) protein is Brevinin-2Tc.